Reading from the N-terminus, the 212-residue chain is MAEITASLVKQLRERTGAGMMECKSALVEAKGDLTEGEVVLRKRGIASAGKKASRATKQGLIGTYIHHGGQLGVMVEVNCESDFVARTDDFQELVHDIAMHIAAADPKFIRKEDVTEDVIEKEKDIHKARALAEGKPEKMLDKITEGRMSKFYEEICLLEQPFVKEATLTVGQLVKTKIAKLGENISVARFVRFKVGDAQGSDSGSETPAAE.

The interval 82–85 (SDFV) is involved in Mg(2+) ion dislocation from EF-Tu.

This sequence belongs to the EF-Ts family.

It localises to the cytoplasm. Associates with the EF-Tu.GDP complex and induces the exchange of GDP to GTP. It remains bound to the aminoacyl-tRNA.EF-Tu.GTP complex up to the GTP hydrolysis stage on the ribosome. The sequence is that of Elongation factor Ts from Solibacter usitatus (strain Ellin6076).